The sequence spans 259 residues: MVLATSLKGAHVLITGGTRGMGEAMVHQFLQEEANVSYCARTVTNTEFDEFYKTLPEGNTARAVGTAFNVASKEAIVDWVKSSAERLGRIDVIIANASPMHMEGETEHWVESFAIDVMGFVELVRAATPYLEQSPQASIIVQSSFMGREFYRSPPAAYGPCKAAQLQHVQELSHYLGPKGIRVNAISPGPILCKGGPWEKYSTLMPEWVEEQRLKIPLKRLGGPTEVANVAVFLASPLASFVTGTNVLVDGGIHVGTQF.

NADP(+) is bound by residues Asn96 and Arg125. Residues Ser143 and Ser144 each act as proton donor in the active site. NADP(+) is bound by residues Tyr158, Lys162, and Ile191. The Proton acceptor role is filled by Tyr158. Lys162 functions as the Lowers pKa of active site Tyr in the catalytic mechanism.

The protein belongs to the short-chain dehydrogenases/reductases (SDR) family.

The protein resides in the cytoplasm. It is found in the cytosol. It catalyses the reaction isoepoxydon + NADP(+) = phyllostine + NADPH + H(+). It functions in the pathway mycotoxin biosynthesis; patulin biosynthesis. In terms of biological role, isoepoxydon dehydrogenase; part of the gene cluster that mediates the biosynthesis of patulin, an acetate-derived tetraketide mycotoxin produced by several fungal species that shows antimicrobial properties against several bacteria. PatN catalyzes the conversion of isoepoxydon into phyllostine. The pathway begins with the synthesis of 6-methylsalicylic acid by the polyketide synthase (PKS) patK via condensation of acetate and malonate units. The 6-methylsalicylic acid decarboxylase patG then catalyzes the decarboxylation of 6-methylsalicylic acid to yield m-cresol (also known as 3-methylphenol). These first reactions occur in the cytosol. The intermediate m-cresol is then transported into the endoplasmic reticulum where the cytochrome P450 monooxygenase patH converts it to m-hydroxybenzyl alcohol, which is further converted to gentisyl alcohol by the cytochrome P450 monooxygenase patI. The oxidoreductases patJ and patO further convert gentisyl alcohol to isoepoxydon in the vacuole. PatN catalyzes then the transformation of isoepoxydon into phyllostine. The cluster protein patF is responsible for the conversion from phyllostine to neopatulin whereas the alcohol dehydrogenase patD converts neopatulin to E-ascladiol. The steps between isoepoxydon and E-ascladiol occur in the cytosol, and E-ascladiol is probably secreted to the extracellular space by one of the cluster-specific transporters patC or patM. Finally, the secreted patulin synthase patE catalyzes the conversion of E-ascladiol to patulin. The polypeptide is Isoepoxydon dehydrogenase patN (Aspergillus clavatus (strain ATCC 1007 / CBS 513.65 / DSM 816 / NCTC 3887 / NRRL 1 / QM 1276 / 107)).